Here is a 697-residue protein sequence, read N- to C-terminus: Elongation factor G (697 aa).

A tr-type G domain is found at 8–282 (EDYRNIGIMA…AIVDYLPSPL (275 aa)). Residues 17-24 (AHIDAGKT), 81-85 (DTPGH), and 135-138 (NKMD) contribute to the GTP site.

The protein belongs to the TRAFAC class translation factor GTPase superfamily. Classic translation factor GTPase family. EF-G/EF-2 subfamily.

The protein localises to the cytoplasm. Functionally, catalyzes the GTP-dependent ribosomal translocation step during translation elongation. During this step, the ribosome changes from the pre-translocational (PRE) to the post-translocational (POST) state as the newly formed A-site-bound peptidyl-tRNA and P-site-bound deacylated tRNA move to the P and E sites, respectively. Catalyzes the coordinated movement of the two tRNA molecules, the mRNA and conformational changes in the ribosome. The sequence is that of Elongation factor G from Metamycoplasma arthritidis (strain 158L3-1) (Mycoplasma arthritidis).